A 340-amino-acid polypeptide reads, in one-letter code: Glycerol-3-phosphate dehydrogenase [NAD(P)+] (340 aa).

Residues serine 13, tyrosine 14, and lysine 108 each contribute to the NADPH site. Sn-glycerol 3-phosphate-binding residues include lysine 108, glycine 137, and threonine 139. Position 141 (alanine 141) interacts with NADPH. Residues lysine 193, aspartate 246, serine 256, arginine 257, and asparagine 258 each contribute to the sn-glycerol 3-phosphate site. Lysine 193 (proton acceptor) is an active-site residue. Arginine 257 provides a ligand contact to NADPH. 2 residues coordinate NADPH: isoleucine 281 and glutamate 283.

It belongs to the NAD-dependent glycerol-3-phosphate dehydrogenase family.

Its subcellular location is the cytoplasm. It catalyses the reaction sn-glycerol 3-phosphate + NAD(+) = dihydroxyacetone phosphate + NADH + H(+). The catalysed reaction is sn-glycerol 3-phosphate + NADP(+) = dihydroxyacetone phosphate + NADPH + H(+). Its pathway is membrane lipid metabolism; glycerophospholipid metabolism. Its function is as follows. Catalyzes the reduction of the glycolytic intermediate dihydroxyacetone phosphate (DHAP) to sn-glycerol 3-phosphate (G3P), the key precursor for phospholipid synthesis. The sequence is that of Glycerol-3-phosphate dehydrogenase [NAD(P)+] from Bartonella quintana (strain Toulouse) (Rochalimaea quintana).